The primary structure comprises 182 residues: Ribosome-recycling factor (182 aa).

The protein belongs to the RRF family.

Its subcellular location is the cytoplasm. Responsible for the release of ribosomes from messenger RNA at the termination of protein biosynthesis. May increase the efficiency of translation by recycling ribosomes from one round of translation to another. This chain is Ribosome-recycling factor, found in Prochlorococcus marinus (strain MIT 9313).